A 237-amino-acid polypeptide reads, in one-letter code: Neural retina-specific leucine zipper protein (237 aa).

Glycyl lysine isopeptide (Lys-Gly) (interchain with G-Cter in SUMO) cross-links involve residues Lys-20 and Lys-24. Residues 26–64 (EPSEGRSGVPTASLGSTPYSSVPPSPTFSEPGMVGGGEA) are disordered. The minimal transactivation domain (MTD) stretch occupies residues 30 to 93 (GRSGVPTASL…SDEVLGLSPD (64 aa)). A basic motif region spans residues 159 to 185 (RLKQRRRTLKNRGYAQACRSKRLQQRR). The region spanning 159-222 (RLKQRRRTLK…DLYKARCDRL (64 aa)) is the bZIP domain. Residues 187 to 208 (LEAERARLAAQLDALRAEVARL) form a leucine-zipper region.

It belongs to the bZIP family. Interacts with FIZ1; this interaction represses transactivation. Interacts (via the leucine-zipper domain) with CRX. Post-translationally, disumoylated at Lys-20. Sumoylation modulates the transcriptional activity of NRL on RHO and NR2E3 promoters, and is required for normal rod differentiation. Phosphorylated. Expressed in the retina (at protein level).

Its subcellular location is the cytoplasm. The protein localises to the nucleus. In terms of biological role, acts as a transcriptional activator which regulates the expression of several rod-specific genes, including RHO and PDE6B. Also functions as a transcriptional coactivator, stimulating transcription mediated by the transcription factor CRX and NR2E3. Binds to the rhodopsin promoter in a sequence-specific manner. This is Neural retina-specific leucine zipper protein (Nrl) from Mus musculus (Mouse).